The sequence spans 301 residues: Acetylglutamate kinase (301 aa).

Residues 68 to 69 (GG), arginine 90, and asparagine 195 contribute to the substrate site.

Belongs to the acetylglutamate kinase family. ArgB subfamily.

The protein resides in the cytoplasm. It catalyses the reaction N-acetyl-L-glutamate + ATP = N-acetyl-L-glutamyl 5-phosphate + ADP. Its pathway is amino-acid biosynthesis; L-arginine biosynthesis; N(2)-acetyl-L-ornithine from L-glutamate: step 2/4. Functionally, catalyzes the ATP-dependent phosphorylation of N-acetyl-L-glutamate. In Pseudomonas putida (strain W619), this protein is Acetylglutamate kinase.